The following is a 361-amino-acid chain: tRNA 2-selenouridine synthase (361 aa).

The region spanning 11-134 (LLADTPLIDV…LRQTAIQATW (124 aa)) is the Rhodanese domain. Catalysis depends on C94, which acts as the S-selanylcysteine intermediate.

The protein belongs to the SelU family. In terms of assembly, monomer.

The enzyme catalyses 5-methylaminomethyl-2-thiouridine(34) in tRNA + selenophosphate + (2E)-geranyl diphosphate + H2O + H(+) = 5-methylaminomethyl-2-selenouridine(34) in tRNA + (2E)-thiogeraniol + phosphate + diphosphate. It catalyses the reaction 5-methylaminomethyl-2-thiouridine(34) in tRNA + (2E)-geranyl diphosphate = 5-methylaminomethyl-S-(2E)-geranyl-thiouridine(34) in tRNA + diphosphate. It carries out the reaction 5-methylaminomethyl-S-(2E)-geranyl-thiouridine(34) in tRNA + selenophosphate + H(+) = 5-methylaminomethyl-2-(Se-phospho)selenouridine(34) in tRNA + (2E)-thiogeraniol. The catalysed reaction is 5-methylaminomethyl-2-(Se-phospho)selenouridine(34) in tRNA + H2O = 5-methylaminomethyl-2-selenouridine(34) in tRNA + phosphate. Functionally, involved in the post-transcriptional modification of the uridine at the wobble position (U34) of tRNA(Lys), tRNA(Glu) and tRNA(Gln). Catalyzes the conversion of 2-thiouridine (S2U-RNA) to 2-selenouridine (Se2U-RNA). Acts in a two-step process involving geranylation of 2-thiouridine (S2U) to S-geranyl-2-thiouridine (geS2U) and subsequent selenation of the latter derivative to 2-selenouridine (Se2U) in the tRNA chain. The sequence is that of tRNA 2-selenouridine synthase from Salmonella schwarzengrund (strain CVM19633).